The chain runs to 407 residues: Multifunctional CCA protein (407 aa).

ATP is bound by residues Gly-8 and Arg-11. Gly-8 and Arg-11 together coordinate CTP. Asp-21 and Asp-23 together coordinate Mg(2+). Residues Arg-91, Arg-137, and Arg-140 each contribute to the ATP site. CTP contacts are provided by Arg-91, Arg-137, and Arg-140. The 102-residue stretch at 225 to 326 (CGDHVMRVLD…LRLLKDCDAL (102 aa)) folds into the HD domain.

This sequence belongs to the tRNA nucleotidyltransferase/poly(A) polymerase family. Bacterial CCA-adding enzyme type 1 subfamily. In terms of assembly, monomer. Can also form homodimers and oligomers. Requires Mg(2+) as cofactor. Ni(2+) is required as a cofactor.

The catalysed reaction is a tRNA precursor + 2 CTP + ATP = a tRNA with a 3' CCA end + 3 diphosphate. It carries out the reaction a tRNA with a 3' CCA end + 2 CTP + ATP = a tRNA with a 3' CCACCA end + 3 diphosphate. In terms of biological role, catalyzes the addition and repair of the essential 3'-terminal CCA sequence in tRNAs without using a nucleic acid template. Adds these three nucleotides in the order of C, C, and A to the tRNA nucleotide-73, using CTP and ATP as substrates and producing inorganic pyrophosphate. tRNA 3'-terminal CCA addition is required both for tRNA processing and repair. Also involved in tRNA surveillance by mediating tandem CCA addition to generate a CCACCA at the 3' terminus of unstable tRNAs. While stable tRNAs receive only 3'-terminal CCA, unstable tRNAs are marked with CCACCA and rapidly degraded. This is Multifunctional CCA protein from Chromobacterium violaceum (strain ATCC 12472 / DSM 30191 / JCM 1249 / CCUG 213 / NBRC 12614 / NCIMB 9131 / NCTC 9757 / MK).